The primary structure comprises 74 residues: U4-theraphotoxin-Cg1a (74 aa).

A signal peptide spans 1–19; sequence MNATIFALLLLLNLAMHNA. The propeptide occupies 20 to 39; the sequence is AEQSSETDMDDTLLIPEINR. 3 cysteine pairs are disulfide-bonded: Cys42–Cys56, Cys49–Cys61, and Cys55–Cys71.

It belongs to the neurotoxin 36 family. 01 subfamily. As to expression, expressed by the venom gland.

It localises to the secreted. Probable ion channel inhibitor. This Chilobrachys guangxiensis (Chinese earth tiger tarantula) protein is U4-theraphotoxin-Cg1a.